The sequence spans 343 residues: Methionine import ATP-binding protein MetN 1 (343 aa).

The 240-residue stretch at 2-241 folds into the ABC transporter domain; the sequence is IKLSNITKVF…PKTPLAQKFI (240 aa). 38-45 is an ATP binding site; the sequence is GASGAGKS.

Belongs to the ABC transporter superfamily. Methionine importer (TC 3.A.1.24) family. The complex is composed of two ATP-binding proteins (MetN), two transmembrane proteins (MetI) and a solute-binding protein (MetQ).

It is found in the cell inner membrane. It carries out the reaction L-methionine(out) + ATP + H2O = L-methionine(in) + ADP + phosphate + H(+). The enzyme catalyses D-methionine(out) + ATP + H2O = D-methionine(in) + ADP + phosphate + H(+). Functionally, part of the ABC transporter complex MetNIQ involved in methionine import. Responsible for energy coupling to the transport system. This is Methionine import ATP-binding protein MetN 1 from Salmonella typhi.